The sequence spans 287 residues: Putative S-adenosyl-L-methionine-dependent methyltransferase SACE_1742 (287 aa).

S-adenosyl-L-methionine-binding positions include Asp119 and 148–149; that span reads DL.

Belongs to the UPF0677 family.

Exhibits S-adenosyl-L-methionine-dependent methyltransferase activity. This is Putative S-adenosyl-L-methionine-dependent methyltransferase SACE_1742 from Saccharopolyspora erythraea (strain ATCC 11635 / DSM 40517 / JCM 4748 / NBRC 13426 / NCIMB 8594 / NRRL 2338).